The following is a 391-amino-acid chain: 3-ketoacyl-CoA thiolase (391 aa).

The active-site Acyl-thioester intermediate is the Cys-95. Residues His-347 and Cys-377 each act as proton acceptor in the active site.

This sequence belongs to the thiolase-like superfamily. Thiolase family. In terms of assembly, heterotetramer of two alpha chains (FadB) and two beta chains (FadA).

It is found in the cytoplasm. It carries out the reaction an acyl-CoA + acetyl-CoA = a 3-oxoacyl-CoA + CoA. The protein operates within lipid metabolism; fatty acid beta-oxidation. Its function is as follows. Catalyzes the final step of fatty acid oxidation in which acetyl-CoA is released and the CoA ester of a fatty acid two carbons shorter is formed. In Pseudomonas syringae pv. tomato (strain ATCC BAA-871 / DC3000), this protein is 3-ketoacyl-CoA thiolase.